Reading from the N-terminus, the 424-residue chain is Serine hydroxymethyltransferase 2 (424 aa).

(6S)-5,6,7,8-tetrahydrofolate-binding positions include leucine 125 and 129 to 131; that span reads GHL. At lysine 234 the chain carries N6-(pyridoxal phosphate)lysine. Glutamate 250 is a (6S)-5,6,7,8-tetrahydrofolate binding site.

Belongs to the SHMT family. In terms of assembly, homodimer. It depends on pyridoxal 5'-phosphate as a cofactor.

It localises to the cytoplasm. The catalysed reaction is (6R)-5,10-methylene-5,6,7,8-tetrahydrofolate + glycine + H2O = (6S)-5,6,7,8-tetrahydrofolate + L-serine. It functions in the pathway one-carbon metabolism; tetrahydrofolate interconversion. The protein operates within amino-acid biosynthesis; glycine biosynthesis; glycine from L-serine: step 1/1. Functionally, catalyzes the reversible interconversion of serine and glycine with tetrahydrofolate (THF) serving as the one-carbon carrier. This reaction serves as the major source of one-carbon groups required for the biosynthesis of purines, thymidylate, methionine, and other important biomolecules. Also exhibits THF-independent aldolase activity toward beta-hydroxyamino acids, producing glycine and aldehydes, via a retro-aldol mechanism. The protein is Serine hydroxymethyltransferase 2 of Cupriavidus pinatubonensis (strain JMP 134 / LMG 1197) (Cupriavidus necator (strain JMP 134)).